A 137-amino-acid chain; its full sequence is Large ribosomal subunit protein uL16 (137 aa).

This sequence belongs to the universal ribosomal protein uL16 family. As to quaternary structure, part of the 50S ribosomal subunit.

Binds 23S rRNA and is also seen to make contacts with the A and possibly P site tRNAs. The protein is Large ribosomal subunit protein uL16 of Rhizobium rhizogenes (strain K84 / ATCC BAA-868) (Agrobacterium radiobacter).